A 566-amino-acid polypeptide reads, in one-letter code: Bifunctional NADP phosphatase/NAD kinase (566 aa).

An NADP phosphatase region spans residues 1-283 (MDMLEMALNI…KLVGIFGNRW (283 aa)). Residues Glu-66, Asp-85, Val-87, Asp-88, and Asp-229 each coordinate Mg(2+). The segment at 275–566 (LVGIFGNRWR…YNKLKKLSLM (292 aa)) is NAD kinase. The active-site Proton acceptor is Asp-355. NAD(+)-binding positions include 355–356 (DG), Arg-360, 430–431 (NE), Lys-441, Arg-458, Asp-460, 471–476 (TAYSLS), and Asn-528.

The protein in the N-terminal section; belongs to the inositol monophosphatase superfamily. This sequence in the C-terminal section; belongs to the NAD kinase family. As to quaternary structure, homotetramer. The cofactor is Mg(2+).

It localises to the cytoplasm. The enzyme catalyses NAD(+) + ATP = ADP + NADP(+) + H(+). It carries out the reaction NADP(+) + H2O = phosphate + NAD(+). In terms of biological role, involved in the regulation of the intracellular balance between NAD(H) and NADP(H), and is a key enzyme in the biosynthesis of NADP. Catalyzes the phosphorylation and dephosphorylation of NAD and NADP, respectively. Although it shows conflicting dual activities and is able to supply NADP, it seems that its physiological role is to prevent excess accumulation of NADP. This chain is Bifunctional NADP phosphatase/NAD kinase, found in Methanococcus maripaludis (strain DSM 14266 / JCM 13030 / NBRC 101832 / S2 / LL).